A 247-amino-acid polypeptide reads, in one-letter code: Myeloid leukemia factor 2 (247 aa).

A disordered region spans residues 122–247 (ETSEMRSAPG…PSRQSRRYDW (126 aa)). Residues 134-144 (RETRRTVRDSD) show a composition bias toward basic and acidic residues. Residues 154–169 (HHIRDRAHILQRSRNH) are compositionally biased toward basic residues. Over residues 170-179 (RTGDQEERQD) the composition is skewed to basic and acidic residues. Positions 182–192 (NLDESEAAAFD) are enriched in acidic residues. The segment covering 193 to 225 (DEWRRETSRYRQQRPLEFRRHEASVGGGRRAEG) has biased composition (basic and acidic residues). Phosphoserine is present on residues serine 216, serine 237, and serine 239.

The protein belongs to the MLF family.

The protein localises to the cytoplasm. Its subcellular location is the nucleus. This chain is Myeloid leukemia factor 2 (Mlf2), found in Mus musculus (Mouse).